The primary structure comprises 347 residues: NAD-dependent alcohol dehydrogenase (347 aa).

N6-methyllysine; partial is present on lysine 11. Residues cysteine 38, histidine 68, glutamate 98, cysteine 101, cysteine 104, cysteine 112, and cysteine 154 each contribute to the Zn(2+) site. Lysine 213 carries the post-translational modification N6-methyllysine; partial.

It belongs to the zinc-containing alcohol dehydrogenase family. As to quaternary structure, homodimer and homotetramer. It depends on Zn(2+) as a cofactor.

The enzyme catalyses a primary alcohol + NAD(+) = an aldehyde + NADH + H(+). It carries out the reaction a secondary alcohol + NAD(+) = a ketone + NADH + H(+). This chain is NAD-dependent alcohol dehydrogenase (adh), found in Saccharolobus solfataricus (strain ATCC 35092 / DSM 1617 / JCM 11322 / P2) (Sulfolobus solfataricus).